Reading from the N-terminus, the 629-residue chain is tRNA uridine 5-carboxymethylaminomethyl modification enzyme MnmG (629 aa).

FAD contacts are provided by residues 14-19, V126, and S181; that span reads GAGHAG. Residue 273 to 287 coordinates NAD(+); that stretch reads GPRYCPSIEDKVVRF. Q370 is an FAD binding site.

It belongs to the MnmG family. Homodimer. Heterotetramer of two MnmE and two MnmG subunits. FAD is required as a cofactor.

The protein resides in the cytoplasm. Its function is as follows. NAD-binding protein involved in the addition of a carboxymethylaminomethyl (cmnm) group at the wobble position (U34) of certain tRNAs, forming tRNA-cmnm(5)s(2)U34. In Bacillus cereus (strain ATCC 14579 / DSM 31 / CCUG 7414 / JCM 2152 / NBRC 15305 / NCIMB 9373 / NCTC 2599 / NRRL B-3711), this protein is tRNA uridine 5-carboxymethylaminomethyl modification enzyme MnmG.